Reading from the N-terminus, the 237-residue chain is Phosphoadenosine 5'-phosphosulfate reductase (237 aa).

Residue cysteine 231 is the Nucleophile; cysteine thiosulfonate intermediate of the active site.

It belongs to the PAPS reductase family. CysH subfamily.

It localises to the cytoplasm. It carries out the reaction [thioredoxin]-disulfide + sulfite + adenosine 3',5'-bisphosphate + 2 H(+) = [thioredoxin]-dithiol + 3'-phosphoadenylyl sulfate. The protein operates within sulfur metabolism; hydrogen sulfide biosynthesis; sulfite from sulfate: step 3/3. Functionally, catalyzes the formation of sulfite from phosphoadenosine 5'-phosphosulfate (PAPS) using thioredoxin as an electron donor. This chain is Phosphoadenosine 5'-phosphosulfate reductase, found in Xylella fastidiosa (strain M12).